Consider the following 199-residue polypeptide: MRNNKNQMYIIKIFIALAMITGIIFLCLLYSSLTPSKLKIGVKTSNMDDSPKIKFTLIDQEGKKFDSTHLQGHLSLIYFGTTYSLYDNQTLKRVEDIIKILKKENILVQVVFITLDSEHDTSEVLKKYLEKIDDNFIGLTGRVEDIEQLADQFKVFFYTSKIFDVKTNKYELQHSNFVYLISSQGKFLKHYYLGLPKNG.

It belongs to the SCO1/2 family.

This is SCO2-like protein RC0042 from Rickettsia conorii (strain ATCC VR-613 / Malish 7).